The chain runs to 49 residues: GVSCLCDSDGPSVRGNTLSGILWFYPSGCPSGWHNCKAHGPTIGWCCKQ.

Cystine bridges form between Cys-4–Cys-46, Cys-6–Cys-36, and Cys-29–Cys-47.

It belongs to the sea anemone sodium channel inhibitory toxin family. Type I subfamily.

Its subcellular location is the secreted. The protein localises to the nematocyst. Binds specifically to voltage-gated sodium channels (Nav) (site 3), thereby delaying their inactivation during signal transduction. Thus it may strongly stimulate mammalian cardiac muscle contraction. This Anthopleura xanthogrammica (Giant green sea anemone) protein is Delta-actitoxin-Axm1h.